Reading from the N-terminus, the 233-residue chain is MAKLTKRARLIAEKVEATKLYSVEEAVALLSELSTVKFKESIDVSVNLGVDPRKSDQVVRGSTVLPHGAGKDVRVAVFAQGANAEAAKEAGADVVGFEDLAEQVKAGNLDFDVVIASPDAMRIVGQLGQVLGPRGLMPNPKVGTVTPDVATAVRNAKAGQARYRTDKNGIIHAAVGSIEFAADAIRGNLEALLTDLRRAKPASSKGVYLRKVTLSSTMGPGLQIDLGALNSTK.

Belongs to the universal ribosomal protein uL1 family. As to quaternary structure, part of the 50S ribosomal subunit.

Binds directly to 23S rRNA. The L1 stalk is quite mobile in the ribosome, and is involved in E site tRNA release. In terms of biological role, protein L1 is also a translational repressor protein, it controls the translation of the L11 operon by binding to its mRNA. The sequence is that of Large ribosomal subunit protein uL1 from Marinomonas sp. (strain MWYL1).